The chain runs to 380 residues: Chaperone protein DnaJ (380 aa).

A J domain is found at 5-69 (DYYEILGVSK…QKRAHYDQFG (65 aa)). The CR-type zinc-finger motif lies at 135 to 217 (GKETDIEIPR…CGGTGRVKRR (83 aa)). Zn(2+) is bound by residues Cys-148, Cys-151, Cys-165, Cys-168, Cys-191, Cys-194, Cys-205, and Cys-208. CXXCXGXG motif repeat units follow at residues 148–155 (CNTCHGTG), 165–172 (CSYCHGTG), 191–198 (CPYCGGTG), and 205–212 (CTTCGGTG).

Belongs to the DnaJ family. As to quaternary structure, homodimer. Requires Zn(2+) as cofactor.

Its subcellular location is the cytoplasm. Participates actively in the response to hyperosmotic and heat shock by preventing the aggregation of stress-denatured proteins and by disaggregating proteins, also in an autonomous, DnaK-independent fashion. Unfolded proteins bind initially to DnaJ; upon interaction with the DnaJ-bound protein, DnaK hydrolyzes its bound ATP, resulting in the formation of a stable complex. GrpE releases ADP from DnaK; ATP binding to DnaK triggers the release of the substrate protein, thus completing the reaction cycle. Several rounds of ATP-dependent interactions between DnaJ, DnaK and GrpE are required for fully efficient folding. Also involved, together with DnaK and GrpE, in the DNA replication of plasmids through activation of initiation proteins. The protein is Chaperone protein DnaJ of Parageobacillus thermoglucosidasius (Geobacillus thermoglucosidasius).